The primary structure comprises 793 residues: Transcription factor castor (793 aa).

Positions 44–53 (NEDISSSTSV) are enriched in polar residues. Disordered stretches follow at residues 44 to 101 (NEDI…NLIA), 199 to 259 (VTST…HTNA), and 272 to 296 (LEST…DSSY). 3 stretches are compositionally biased toward low complexity: residues 54 to 68 (QQQQ…QQPQ), 81 to 98 (SSQN…PNSN), and 210 to 221 (ATPAPSAGATAG). Threonine 211 bears the Phosphothreonine mark. Serine 215 bears the Phosphoserine mark. The segment covering 233 to 242 (ESADDDEDDD) has biased composition (acidic residues). The span at 245–254 (LSSLTSCSSS) shows a compositional bias: low complexity. Residues 273 to 284 (ESTTDSLDSPSM) are compositionally biased toward polar residues. A C2H2-type 1; atypical zinc finger spans residues 377–402 (FHCHEEPCQGKILSKKDDIIRHLKWH). 3 consecutive C2H2-type zinc fingers follow at residues 439 to 463 (YHCV…ANFH), 498 to 522 (YHCC…KTYH), and 556 to 580 (IHCV…KRKH). Residues 599-682 (EESSLDAMPQ…RLKVEDESSN (84 aa)) are disordered. Residues 608 to 629 (QQQQQQQQQQPTSLSQSQSSSS) show a composition bias toward low complexity. Polar residues predominate over residues 630 to 644 (VCGGSNTSTPLSSLS). A DNA-binding region (a.T hook) is located at residues 650–662 (ARKRGRPPKKIQL).

In terms of tissue distribution, expressed in a specific subset of neuroblasts in the ventral nerve cord and the procephalic region in the embryo. Expressed in many, if not all, late delaminating NBs, and in early NBs, but only after they have undergone several rounds of ganglion mother cell-producing divisions.

The protein resides in the nucleus. Its function is as follows. Transcription factor that specifies expression of key genes in developing central nervous system (CNS). Essential for many, if not all, late developing neuroblastoma (NB) sublineages. Binds to the 5'-[CG]C[CT][CT]AAAAA[AT]-3' DNA sequence, like hb, suggesting that cas and hb act as a late regulators in early and late CNS NB sublineage, respectively. Acts by repressing expression of nub/pdm-1 and pdm2/pdm-2 POU genes, and restrict their pattern of expression in appropriate cells. Required for a full expression of vvl/drifter and acj6/I-POU; it is however unknown whether it directly activates these genes. Controls engrailed (en) expression in the ventral nerve cord. This Drosophila melanogaster (Fruit fly) protein is Transcription factor castor (cas).